A 550-amino-acid polypeptide reads, in one-letter code: Membrane protein of ER body 2 (550 aa).

The interval 46 to 199 is disordered; sequence EFRSKAAATA…SSDSEEKSNL (154 aa). 2 stretches are compositionally biased toward low complexity: residues 80–105 and 112–121; these read SVSE…SETG and TGSNEENGNN. The span at 122-132 shows a compositional bias: polar residues; sequence WLESSSTNLPN. Positions 134–165 form a coiled coil; sequence ENKRQRNGEDCEIEEEEENNERSLSDSEEKSN. Over residues 143–152 the composition is skewed to acidic residues; that stretch reads DCEIEEEEEN. Composition is skewed to basic and acidic residues over residues 153-166 and 185-198; these read NERS…KSNL and KNER…EKSN. Transmembrane regions (helical) follow at residues 374–394, 425–445, 458–478, and 500–520; these read STMN…IVLA, ILVA…VYAF, ISVF…KVYV, and SIVV…GEYI. Residues 393–418 are a coiled coil; that stretch reads LAQNFQDLRNSSDQEKDRYEELLGRR.

It belongs to the CCC1 family. In terms of assembly, interacts directly or indirectly with NAI2.

It localises to the endoplasmic reticulum membrane. Functionally, may sequester excess cytosolic iron and manganese into endoplasmic reticulum to reduce metal ion toxicity. Not essential for the accumulation of ER body components, including PYK10. This is Membrane protein of ER body 2 (MEB2) from Arabidopsis thaliana (Mouse-ear cress).